We begin with the raw amino-acid sequence, 875 residues long: DNA mismatch repair protein MutS (875 aa).

An ATP-binding site is contributed by 625–632 (GPNMGGKS).

The protein belongs to the DNA mismatch repair MutS family.

Its function is as follows. This protein is involved in the repair of mismatches in DNA. It is possible that it carries out the mismatch recognition step. This protein has a weak ATPase activity. The protein is DNA mismatch repair protein MutS of Symbiobacterium thermophilum (strain DSM 24528 / JCM 14929 / IAM 14863 / T).